Here is a 91-residue protein sequence, read N- to C-terminus: uncharacterized protein (91 aa).

Transmembrane regions (helical) follow at residues 9–29, 30–50, and 67–87; these read LIHAIGGIIFGYLANYVYTAG, LGIFSGIATLIFLFIGAVIFG, and WLGCGVLPFFLVAIVVWVLKF.

The protein resides in the cell membrane. This is an uncharacterized protein from Methanocaldococcus jannaschii (strain ATCC 43067 / DSM 2661 / JAL-1 / JCM 10045 / NBRC 100440) (Methanococcus jannaschii).